We begin with the raw amino-acid sequence, 274 residues long: Diaminopimelate epimerase (274 aa).

Residues N11, Q44, and N64 each coordinate substrate. C73 serves as the catalytic Proton donor. Residues 74–75 (GN), N157, N190, and 208–209 (ER) each bind substrate. C217 functions as the Proton acceptor in the catalytic mechanism. Residue 218–219 (GS) coordinates substrate.

This sequence belongs to the diaminopimelate epimerase family. As to quaternary structure, homodimer.

It is found in the cytoplasm. The catalysed reaction is (2S,6S)-2,6-diaminopimelate = meso-2,6-diaminopimelate. The protein operates within amino-acid biosynthesis; L-lysine biosynthesis via DAP pathway; DL-2,6-diaminopimelate from LL-2,6-diaminopimelate: step 1/1. In terms of biological role, catalyzes the stereoinversion of LL-2,6-diaminopimelate (L,L-DAP) to meso-diaminopimelate (meso-DAP), a precursor of L-lysine and an essential component of the bacterial peptidoglycan. This chain is Diaminopimelate epimerase, found in Escherichia coli O127:H6 (strain E2348/69 / EPEC).